The primary structure comprises 255 residues: Increased copper sensitivity protein 2 (255 aa).

The segment covering 1–12 (MGKFEQKERERI) has biased composition (basic and acidic residues). Disordered stretches follow at residues 1–32 (MGKF…KSLG) and 82–142 (PGDK…RKSH). A compositionally biased stretch (polar residues) spans 13-30 (STFSFPTTGSQSSTSIKS). A compositionally biased stretch (basic residues) spans 131-142 (SGRRKSYHRKSH). Ser-217 carries the phosphoserine modification.

The polypeptide is Increased copper sensitivity protein 2 (ICS2) (Saccharomyces cerevisiae (strain ATCC 204508 / S288c) (Baker's yeast)).